The following is a 526-amino-acid chain: Methyltetrahydroprotoberberine 14-monooxygenase (526 aa).

The chain crosses the membrane as a helical span at residues 14-34 (LLLQYLQPISVALVVIALVWN). Cys468 is a heme binding site.

It belongs to the cytochrome P450 family. Requires heme as cofactor. Mainly expressed in roots, and barely in stems, leaves and carpels.

Its subcellular location is the membrane. It carries out the reaction (S)-cis-N-methylcanadine + reduced [NADPH--hemoprotein reductase] + O2 = allocryptopine + oxidized [NADPH--hemoprotein reductase] + H2O + 2 H(+). It catalyses the reaction (S)-cis-N-methylstylopine + reduced [NADPH--hemoprotein reductase] + O2 = protopine + oxidized [NADPH--hemoprotein reductase] + H2O + 2 H(+). The enzyme catalyses (S)-cis-N-methyltetrahydrothalifendine + reduced [NADPH--hemoprotein reductase] + O2 = 7-hydroxy-8-methoxy-11-methyl-17,19-dioxa-11-azatetracyclo[12.7.0.0(4,9).0(16,20)]henicosa-1(21),4(9),5,7,14,16(20)-hexaen-2-one + oxidized [NADPH--hemoprotein reductase] + H2O + 2 H(+). The catalysed reaction is (S)-cis-N-methyltetrahydropalmatine + reduced [NADPH--hemoprotein reductase] + O2 = muramine + oxidized [NADPH--hemoprotein reductase] + H2O + 2 H(+). It participates in alkaloid biosynthesis. Repressed by cytochrome P450 inhibitors ketoconazole, metyrapone, prochloraz, ancymidol and cytochrome C. Involved in the biosynthesis of the isoquinoline alkaloid sanguinarine. Catalyzes the conversion of N-methylated protoberberine alkaloids N-methylstylopine and N-methylcanadine into protopine and allocryptopine, respectively. Can also use (S)-cis-N-methyltetrahydrothalifendine and (S)-cis-N-methyltetrahydropalmatine as substrates. This Papaver somniferum (Opium poppy) protein is Methyltetrahydroprotoberberine 14-monooxygenase.